The chain runs to 203 residues: ATP-dependent Clp protease proteolytic subunit 2 (203 aa).

S97 serves as the catalytic Nucleophile. The active site involves H122.

Belongs to the peptidase S14 family. In terms of assembly, fourteen ClpP subunits assemble into 2 heptameric rings which stack back to back to give a disk-like structure with a central cavity, resembling the structure of eukaryotic proteasomes.

It is found in the cytoplasm. The enzyme catalyses Hydrolysis of proteins to small peptides in the presence of ATP and magnesium. alpha-casein is the usual test substrate. In the absence of ATP, only oligopeptides shorter than five residues are hydrolyzed (such as succinyl-Leu-Tyr-|-NHMec, and Leu-Tyr-Leu-|-Tyr-Trp, in which cleavage of the -Tyr-|-Leu- and -Tyr-|-Trp bonds also occurs).. Cleaves peptides in various proteins in a process that requires ATP hydrolysis. Has a chymotrypsin-like activity. Plays a major role in the degradation of misfolded proteins. The chain is ATP-dependent Clp protease proteolytic subunit 2 from Myxococcus xanthus (strain DK1622).